Here is a 208-residue protein sequence, read N- to C-terminus: Large ribosomal subunit protein uL4 (208 aa).

The segment at 58-77 is disordered; sequence RGGGRKPWRQKGTGRARQGS. Positions 60–71 are enriched in basic residues; that stretch reads GGRKPWRQKGTG.

This sequence belongs to the universal ribosomal protein uL4 family. In terms of assembly, part of the 50S ribosomal subunit.

Its function is as follows. One of the primary rRNA binding proteins, this protein initially binds near the 5'-end of the 23S rRNA. It is important during the early stages of 50S assembly. It makes multiple contacts with different domains of the 23S rRNA in the assembled 50S subunit and ribosome. In terms of biological role, forms part of the polypeptide exit tunnel. This Caldicellulosiruptor saccharolyticus (strain ATCC 43494 / DSM 8903 / Tp8T 6331) protein is Large ribosomal subunit protein uL4.